Reading from the N-terminus, the 334-residue chain is G2/mitotic-specific cyclin-1 (334 aa).

This sequence belongs to the cyclin family. Cyclin AB subfamily.

In terms of biological role, essential for the control of the cell cycle at the G2/M (mitosis) transition. This is G2/mitotic-specific cyclin-1 (CYC1) from Trypanosoma brucei brucei.